The primary structure comprises 276 residues: UPF0276 protein AM1_3026 (276 aa).

Belongs to the UPF0276 family.

This chain is UPF0276 protein AM1_3026, found in Acaryochloris marina (strain MBIC 11017).